The following is a 418-amino-acid chain: Serine hydroxymethyltransferase (418 aa).

(6S)-5,6,7,8-tetrahydrofolate is bound by residues Leu-121 and 125–127; that span reads GHL. At Lys-230 the chain carries N6-(pyridoxal phosphate)lysine. 356 to 358 contributes to the (6S)-5,6,7,8-tetrahydrofolate binding site; the sequence is SPF.

This sequence belongs to the SHMT family. As to quaternary structure, homodimer. Requires pyridoxal 5'-phosphate as cofactor.

It localises to the cytoplasm. It catalyses the reaction (6R)-5,10-methylene-5,6,7,8-tetrahydrofolate + glycine + H2O = (6S)-5,6,7,8-tetrahydrofolate + L-serine. Its pathway is one-carbon metabolism; tetrahydrofolate interconversion. It functions in the pathway amino-acid biosynthesis; glycine biosynthesis; glycine from L-serine: step 1/1. In terms of biological role, catalyzes the reversible interconversion of serine and glycine with tetrahydrofolate (THF) serving as the one-carbon carrier. This reaction serves as the major source of one-carbon groups required for the biosynthesis of purines, thymidylate, methionine, and other important biomolecules. Also exhibits THF-independent aldolase activity toward beta-hydroxyamino acids, producing glycine and aldehydes, via a retro-aldol mechanism. This is Serine hydroxymethyltransferase from Shewanella sediminis (strain HAW-EB3).